The following is a 747-amino-acid chain: Ubiquitin carboxyl-terminal hydrolase 13 (747 aa).

The region spanning 140–668 (FGYENFGNTC…TAYVLFYKAM (529 aa)) is the USP domain. Cysteine 149 functions as the Nucleophile in the catalytic mechanism. 2 disordered regions span residues 172–305 (PKKS…RPPD) and 318–367 (YENP…RKKS). Residues 174–183 (KSRESDQPRK) are compositionally biased toward basic and acidic residues. Serine 198 carries the phosphoserine modification. The segment covering 225 to 235 (PVNSVNSNTAG) has biased composition (polar residues). Positions 251–260 (HVQDNNKKEG) are enriched in basic and acidic residues. The span at 319-343 (ENPSRGSSNSNNLDLKGESNSSLST) shows a compositional bias: polar residues. Catalysis depends on histidine 619, which acts as the Proton acceptor.

This sequence belongs to the peptidase C19 family.

The catalysed reaction is Thiol-dependent hydrolysis of ester, thioester, amide, peptide and isopeptide bonds formed by the C-terminal Gly of ubiquitin (a 76-residue protein attached to proteins as an intracellular targeting signal).. In Saccharomyces cerevisiae (strain ATCC 204508 / S288c) (Baker's yeast), this protein is Ubiquitin carboxyl-terminal hydrolase 13 (UBP13).